The primary structure comprises 134 residues: Probable thionin-2.4 (134 aa).

A signal peptide spans 1 to 24; the sequence is MEGKTLIVSVLIMSLFMAQNQVDA. 3 disulfide bridges follow: Cys27-Cys64, Cys28-Cys56, and Cys40-Cys50. Residues 71–134 constitute a propeptide, acidic domain; that stretch reads DILENTGDAV…KGSMNAVENA (64 aa).

The protein belongs to the plant thionin (TC 1.C.44) family.

It is found in the secreted. Functionally, thionins are small plant proteins which are toxic to animal cells. They seem to exert their toxic effect at the level of the cell membrane. Their precise function is not known. This is Probable thionin-2.4 from Arabidopsis thaliana (Mouse-ear cress).